The sequence spans 366 residues: Chorismate synthase (366 aa).

NADP(+) contacts are provided by Arg-48 and Arg-54. FMN contacts are provided by residues 129–131 (RSS), 241–242 (NA), Gly-290, 305–309 (KPTSS), and Arg-331.

This sequence belongs to the chorismate synthase family. Homotetramer. Requires FMNH2 as cofactor.

The catalysed reaction is 5-O-(1-carboxyvinyl)-3-phosphoshikimate = chorismate + phosphate. The protein operates within metabolic intermediate biosynthesis; chorismate biosynthesis; chorismate from D-erythrose 4-phosphate and phosphoenolpyruvate: step 7/7. Catalyzes the anti-1,4-elimination of the C-3 phosphate and the C-6 proR hydrogen from 5-enolpyruvylshikimate-3-phosphate (EPSP) to yield chorismate, which is the branch point compound that serves as the starting substrate for the three terminal pathways of aromatic amino acid biosynthesis. This reaction introduces a second double bond into the aromatic ring system. This chain is Chorismate synthase, found in Nitrobacter hamburgensis (strain DSM 10229 / NCIMB 13809 / X14).